A 757-amino-acid polypeptide reads, in one-letter code: Myb-related protein A (757 aa).

HTH myb-type domains lie at 30 to 81 (KKIC…QKVL), 82 to 137 (NPEL…NPEV), and 138 to 188 (KKSS…RRKV). DNA-binding regions (H-T-H motif) lie at residues 58–81 (WAFI…QKVL), 110–133 (WSLI…HNHL), and 161–184 (WAEI…NSTM). The tract at residues 187-209 (KVEQEGYLQDGTKSSSERTGSST) is disordered. The span at 197 to 209 (GTKSSSERTGSST) shows a compositional bias: polar residues. Residues 235 to 300 (IPVYQYASPE…RLSSQAGSLP (66 aa)) form a transcriptional activation domain region. The negative regulatory domain stretch occupies residues 303–558 (SGSFVMEDCV…IRRSLLGSTP (256 aa)).

As to quaternary structure, component of the DREAM complex. Expressed ubiquitously.

The protein localises to the nucleus. Functionally, strong transcriptional activator; DNA-binding protein that specifically recognize the sequence 5'-YAAC[GT]G-3'. Could have a role in the proliferation and/or differentiation of neurogenic, spermatogenic and B-lymphoid cells. This chain is Myb-related protein A (MYBL1), found in Gallus gallus (Chicken).